The primary structure comprises 135 residues: Peptidyl-prolyl cis-trans isomerase FPR2 (135 aa).

The signal sequence occupies residues 1–17 (MMFNIYLFVTFFSTILA). Positions 43–132 (GDKVKVHYTG…VFDVELVDVK (90 aa)) constitute a PPIase FKBP-type domain.

Belongs to the FKBP-type PPIase family. FKBP2 subfamily.

It localises to the endoplasmic reticulum membrane. The catalysed reaction is [protein]-peptidylproline (omega=180) = [protein]-peptidylproline (omega=0). Inhibited by both FK506 and rapamycin. Binds FK506 with 15-fold lower affinity than FKB1. Its function is as follows. PPIases accelerate the folding of proteins. It catalyzes the cis-trans isomerization of proline imidic peptide bonds in oligopeptides. FKBP-13 may play a role in protein trafficking in the ER. The sequence is that of Peptidyl-prolyl cis-trans isomerase FPR2 (FPR2) from Saccharomyces cerevisiae (strain ATCC 204508 / S288c) (Baker's yeast).